Here is a 389-residue protein sequence, read N- to C-terminus: Radial spoke head protein 3 homolog B (389 aa).

The segment at 63–106 is disordered; it reads PTGQVPGQPDPLELQRQQQARRRALARKRAQEQLKPRTPEPVEG. Positions 81–90 are enriched in basic residues; the sequence is QARRRALARK. The span at 91–106 shows a compositional bias: basic and acidic residues; the sequence is RAQEQLKPRTPEPVEG. Position 143 is a phosphothreonine; by MAPK1 (Thr143). The stretch at 206 to 242 forms a coiled coil; it reads YEEIRNVELAEVQRLEEQERRHREEKERRKKQQWEIV. A disordered region spans residues 332–389; it reads EAMPPGQKTNVINGPNTVTDPSVTTLHTQKPVLDRVSSQPAPSQERKPVEEGGHLMAE. The segment covering 338–359 has biased composition (polar residues); that stretch reads QKTNVINGPNTVTDPSVTTLHT. A compositionally biased stretch (basic and acidic residues) spans 375-389; the sequence is QERKPVEEGGHLMAE.

This sequence belongs to the flagellar radial spoke RSP3 family. Component of the axonemal radial spoke 1 (RS1) and 2 (RS2) complexes, at least composed of spoke head proteins RSPH1, RSPH3B, RSPH9 and the cilia-specific component RSPH4A or sperm-specific component RSPH6A, spoke stalk proteins RSPH14, DNAJB13, DYDC1, ROPN1L and NME5, and the RS1 complex-specific anchor protein IQUB. Interacts with IQUB. Interacts with phosphorylated MAPK1. Interacts with MEK1. Interacts with PKA regulatory subunits PRKAR1A and PRKAR1B. Interacts with RSPH1. Interacts with RSPH4A. Interacts with RSPH6A. Interacts with RSPH9. Interacts with LRRC23. As to expression, expressed in ependymal cells (at protein level).

It localises to the cytoplasm. Its subcellular location is the cytoskeleton. It is found in the cilium axoneme. The protein localises to the flagellum axoneme. Functionally, functions as part of axonemal radial spoke complexes that play an important part in the motility of sperm and cilia. Functions as a protein kinase A-anchoring protein that scaffolds the cAMP-dependent protein kinase holoenzyme. May serve as a point of convergence for MAPK and PKA signaling in cilia. This chain is Radial spoke head protein 3 homolog B (Rsph3b), found in Mus musculus (Mouse).